The chain runs to 319 residues: Class I histocompatibility antigen, Non-RT1.A alpha-1 chain (319 aa).

The signal sequence occupies residues 1–24 (MGAMAPRTLLLLLAAVLAPTQTWA). An alpha-1 region spans residues 25-114 (GSHSLRYFHT…LLSYYNQSEG (90 aa)). Topologically, residues 25-307 (GSHSLRYFHT…WEPSPSTDSN (283 aa)) are extracellular. N-linked (GlcNAc...) asparagine glycosylation is present at Asn-110. The interval 115 to 206 (GSHTIQRMYG…ERGKETLLRS (92 aa)) is alpha-2. 2 disulfides stabilise this stretch: Cys-125–Cys-188 and Cys-227–Cys-283. An alpha-3 region spans residues 207-298 (DPPEAHVTLH…GLPEPLSQRW (92 aa)). The Ig-like C1-type domain maps to 209–295 (PEAHVTLHPR…EHEGLPEPLS (87 aa)). Asn-280 is a glycosylation site (N-linked (GlcNAc...) asparagine). Positions 299–307 (EPSPSTDSN) are connecting peptide. Residues 308 to 319 (LLLLFLELWQFL) form a helical membrane-spanning segment.

Belongs to the MHC class I family. Heterodimer of an alpha chain and a beta chain (beta-2-microglobulin).

It localises to the membrane. In terms of biological role, involved in the presentation of foreign antigens to the immune system. This is Class I histocompatibility antigen, Non-RT1.A alpha-1 chain (RT1-Aw2) from Rattus norvegicus (Rat).